Here is a 614-residue protein sequence, read N- to C-terminus: Vitamin B12 transporter BtuB (614 aa).

Positions 1-20 are cleaved as a signal peptide; it reads MIKKASLLTACSVTAFSAWA. At 21–157 the chain is on the periplasmic side; the sequence is QDTSPDTLVV…NIITTRDEPG (137 aa). Residues 26-33 carry the TonB box motif; that stretch reads DTLVVTAN. Positions 38-152 constitute a TBDR plug domain; the sequence is PRSTVLAPTT…IGGVVNIITT (115 aa). Residues L83, S85, N92, and 110-111 each bind cyanocob(III)alamin; that span reads VS. In terms of domain architecture, TBDR beta-barrel spans 155 to 614; it reads EPGTEISAGW…EYTLSGSYTF (460 aa). The beta stranded transmembrane segment at 158–165 threads the bilayer; it reads TEISAGWG. Residues 166–168 lie on the Extracellular side of the membrane; sequence SNS. The chain crosses the membrane as a beta stranded span at residues 169-178; the sequence is YQNYDVSTQQ. Topologically, residues 179 to 183 are periplasmic; that stretch reads QLGDK. A beta stranded transmembrane segment spans residues 184-195; sequence TRVTLLGDYAHT. The Extracellular segment spans residues 196–216; that stretch reads HGYDVVAYGNTGTQAQTDNDG. Ca(2+) is bound by residues D199, Q211, D213, and D215. A beta stranded transmembrane segment spans residues 217 to 227; it reads FLSKTLYGALE. The Periplasmic portion of the chain corresponds to 228-231; that stretch reads HNFT. Residues 232–248 traverse the membrane as a beta stranded segment; the sequence is DAWSGFVRGYGYDNRTN. The Ca(2+) site is built by Y249 and D250. At 249 to 262 the chain is on the extracellular side; sequence YDAYYSPGSPLLDT. Residue A251 coordinates cyanocob(III)alamin. D261 contributes to the Ca(2+) binding site. A beta stranded membrane pass occupies residues 263–277; that stretch reads RKLYSQSWDAGLRYN. G278 is a topological domain (periplasmic). Residues 279 to 296 form a beta stranded membrane-spanning segment; sequence ELIKSQLITSYSHSKDYN. Residues 297–308 lie on the Extracellular side of the membrane; that stretch reads YDPHYGRYDSSA. T309 is a cyanocob(III)alamin binding site. A beta stranded transmembrane segment spans residues 309 to 325; that stretch reads TLDEMKQYTVQWANNVI. Topologically, residues 326-327 are periplasmic; that stretch reads VG. The chain crosses the membrane as a beta stranded span at residues 328 to 337; it reads HGSIGAGVDW. At 338 to 352 the chain is on the extracellular side; the sequence is QKQTTTPGTGYVEDG. Residues 353–369 traverse the membrane as a beta stranded segment; it reads YDQRNTGIYLTGLQQVG. Position 370 (D370) is a topological domain, periplasmic. A beta stranded membrane pass occupies residues 371–381; the sequence is FTFEGAARSDD. Topologically, residues 382 to 384 are extracellular; it reads NSQ. The chain crosses the membrane as a beta stranded span at residues 385–400; sequence FGRHGTWQTSAGWEFI. The Periplasmic segment spans residues 401–402; it reads EG. Residues 403–417 traverse the membrane as a beta stranded segment; sequence YRFIASYGTSYKAPN. Residues 418 to 433 are Extracellular-facing; the sequence is LGQLYGFYGNPNLDPE. A beta stranded transmembrane segment spans residues 434-443; sequence KSKQWEGAFE. Topologically, residues 444–448 are periplasmic; sequence GLTAG. Residues 449–458 traverse the membrane as a beta stranded segment; sequence VNWRISGYRN. Over 459 to 472 the chain is Extracellular; sequence DVSDLIDYDDHTLK. The chain crosses the membrane as a beta stranded span at residues 473 to 490; sequence YYNEGKARIKGVEATANF. Topologically, residues 491–493 are periplasmic; the sequence is DTG. The chain crosses the membrane as a beta stranded span at residues 494–509; that stretch reads PLTHTVSYDYVDARNA. Residues 510 to 516 lie on the Extracellular side of the membrane; sequence ITDTPLL. Position 517 (R517) interacts with cyanocob(III)alamin. Residues 517 to 529 form a beta stranded membrane-spanning segment; the sequence is RRAKQQVKYQLDW. Residues 530–534 are Periplasmic-facing; the sequence is QLYDF. Residues 535-550 form a beta stranded membrane-spanning segment; that stretch reads DWGITYQYLGTRYDKD. Y551 lines the cyanocob(III)alamin pocket. The Extracellular portion of the chain corresponds to 551 to 557; the sequence is YSSYPYQ. Residues 558–572 form a beta stranded membrane-spanning segment; that stretch reads TVKMGGVSLWDLAVA. At 573–584 the chain is on the periplasmic side; that stretch reads YPVTSHLTVRGK. The beta stranded transmembrane segment at 585 to 596 threads the bilayer; the sequence is IANLFDKDYETV. The Extracellular portion of the chain corresponds to 597–601; it reads YGYQT. The TonB C-terminal box motif lies at 597-614; the sequence is YGYQTAGREYTLSGSYTF. A beta stranded transmembrane segment spans residues 602 to 614; it reads AGREYTLSGSYTF.

It belongs to the TonB-dependent receptor family. BtuB (TC 1.B.14.3.1) subfamily. In terms of assembly, interacts with TonB. (Microbial infection) The hairpin motif of the receptor-binding domain of colicin E3 (ColE3) interacts with BtuB without displacing BtuB's central plug. An N-terminal fragment of E3 binds OmpF; trimeric complexes with ColE3, BtuB and OmpF can be cross-linked and immunoprecipitated.

It localises to the cell outer membrane. Its activity is regulated as follows. Calcium increases vitamin B12 binding affinity by a factor of 50-100. With respect to regulation, (Microbial infection) Colicins E1, E3 and K inhibit cyanocobalamin (CN-B12) uptake; E1 and E3 inhibit binding of CN-B12 to cells while colicin K inhibits a later, energy-dependent step of CN-B12. In terms of biological role, involved in the active translocation of vitamin B12 (cyanocobalamin) across the outer membrane to the periplasmic space. It derives its energy for transport by interacting with the trans-periplasmic membrane protein TonB. Functionally, (Microbial infection) Acts as a receptor for bacteriophages BF23 and C1, and for A and E colicins. Cyanocobalamin (CN-B12) in solid medium protects against colicins E1 and E3. Does not act as the translocon for colicin E3 (ColE3). The translocon is OmpF; trimeric complexes with ColE3, BtuB and OmpF can be cross-linked and immunoprecipitated. In Escherichia coli (strain K12), this protein is Vitamin B12 transporter BtuB.